Reading from the N-terminus, the 144-residue chain is Large ribosomal subunit protein uL16m (144 aa).

This sequence belongs to the universal ribosomal protein uL16 family.

It is found in the mitochondrion. This chain is Large ribosomal subunit protein uL16m (mrpl16), found in Dictyostelium discoideum (Social amoeba).